Here is a 333-residue protein sequence, read N- to C-terminus: Large ribosomal subunit protein mL44 (333 aa).

The transit peptide at 1–30 directs the protein to the mitochondrion; that stretch reads MASAVFRLLQQGPRRLLAPAVPTLAPPVRG. In terms of domain architecture, RNase III spans 86–228; the sequence is DLLKTAFINS…LITQMTGKEL (143 aa). The DRBM domain maps to 236-306; sequence NPMGLLVEEL…ARVALRKLYG (71 aa). Positions 311–327 are enriched in basic and acidic residues; it reads RRPWDYSKPKESPKRAE. The segment at 311–333 is disordered; that stretch reads RRPWDYSKPKESPKRAEQTSVAS.

This sequence belongs to the ribonuclease III family. Mitochondrion-specific ribosomal protein mL44 subfamily. As to quaternary structure, component of the mitochondrial ribosome large subunit (39S) which comprises a 16S rRNA and about 50 distinct proteins.

The protein localises to the mitochondrion. Functionally, component of the 39S subunit of mitochondrial ribosome. May have a function in the assembly/stability of nascent mitochondrial polypeptides exiting the ribosome. This chain is Large ribosomal subunit protein mL44 (Mrpl44), found in Mus musculus (Mouse).